The sequence spans 648 residues: Bifunctional protein TilS/HprT (648 aa).

29-34 (SGGPDS) lines the ATP pocket. A Mg(2+)-binding site is contributed by aspartate 627.

It in the N-terminal section; belongs to the tRNA(Ile)-lysidine synthase family. In the C-terminal section; belongs to the purine/pyrimidine phosphoribosyltransferase family. The cofactor is Mg(2+).

Its subcellular location is the cytoplasm. It carries out the reaction IMP + diphosphate = hypoxanthine + 5-phospho-alpha-D-ribose 1-diphosphate. The catalysed reaction is GMP + diphosphate = guanine + 5-phospho-alpha-D-ribose 1-diphosphate. The enzyme catalyses cytidine(34) in tRNA(Ile2) + L-lysine + ATP = lysidine(34) in tRNA(Ile2) + AMP + diphosphate + H(+). Its function is as follows. Ligates lysine onto the cytidine present at position 34 of the AUA codon-specific tRNA(Ile) that contains the anticodon CAU, in an ATP-dependent manner. Cytidine is converted to lysidine, thus changing the amino acid specificity of the tRNA from methionine to isoleucine. The polypeptide is Bifunctional protein TilS/HprT (tilS/hprT) (Listeria monocytogenes serotype 4b (strain F2365)).